Consider the following 71-residue polypeptide: Small ribosomal subunit protein bS21 (71 aa).

The interval 37–71 (HYEKPTQERKRKAAAAVKRHMKRLSREQARRRRLY) is disordered. Residues 45–71 (RKRKAAAAVKRHMKRLSREQARRRRLY) are compositionally biased toward basic residues.

Belongs to the bacterial ribosomal protein bS21 family.

This Alkalilimnicola ehrlichii (strain ATCC BAA-1101 / DSM 17681 / MLHE-1) protein is Small ribosomal subunit protein bS21.